Reading from the N-terminus, the 396-residue chain is Mannonate dehydratase (396 aa).

The protein belongs to the mannonate dehydratase family. It depends on Fe(2+) as a cofactor. Requires Mn(2+) as cofactor.

The catalysed reaction is D-mannonate = 2-dehydro-3-deoxy-D-gluconate + H2O. Its pathway is carbohydrate metabolism; pentose and glucuronate interconversion. Its function is as follows. Catalyzes the dehydration of D-mannonate. The polypeptide is Mannonate dehydratase (Yersinia enterocolitica serotype O:8 / biotype 1B (strain NCTC 13174 / 8081)).